Consider the following 199-residue polypeptide: 3-isopropylmalate dehydratase small subunit (199 aa).

Belongs to the LeuD family. LeuD type 1 subfamily. Heterodimer of LeuC and LeuD.

It catalyses the reaction (2R,3S)-3-isopropylmalate = (2S)-2-isopropylmalate. The protein operates within amino-acid biosynthesis; L-leucine biosynthesis; L-leucine from 3-methyl-2-oxobutanoate: step 2/4. In terms of biological role, catalyzes the isomerization between 2-isopropylmalate and 3-isopropylmalate, via the formation of 2-isopropylmaleate. The polypeptide is 3-isopropylmalate dehydratase small subunit (Bacillus velezensis (strain DSM 23117 / BGSC 10A6 / LMG 26770 / FZB42) (Bacillus amyloliquefaciens subsp. plantarum)).